Here is a 403-residue protein sequence, read N- to C-terminus: F-box/LRR-repeat protein At1g06630 (403 aa).

Residues arginine 11–serine 59 form the F-box domain. LRR repeat units follow at residues leucine 239 to serine 262 and isoleucine 288 to leucine 312.

The protein is F-box/LRR-repeat protein At1g06630 of Arabidopsis thaliana (Mouse-ear cress).